Here is a 132-residue protein sequence, read N- to C-terminus: Small ribosomal subunit protein uS8c (132 aa).

Belongs to the universal ribosomal protein uS8 family. Part of the 30S ribosomal subunit.

It is found in the plastid. Its subcellular location is the chloroplast. One of the primary rRNA binding proteins, it binds directly to 16S rRNA central domain where it helps coordinate assembly of the platform of the 30S subunit. The sequence is that of Small ribosomal subunit protein uS8c (rps8) from Calycanthus floridus var. glaucus (Eastern sweetshrub).